A 127-amino-acid chain; its full sequence is Large ribosomal subunit protein bL17 (127 aa).

Belongs to the bacterial ribosomal protein bL17 family. As to quaternary structure, part of the 50S ribosomal subunit. Contacts protein L32.

The chain is Large ribosomal subunit protein bL17 from Alcanivorax borkumensis (strain ATCC 700651 / DSM 11573 / NCIMB 13689 / SK2).